The following is a 291-amino-acid chain: Proline iminopeptidase (291 aa).

One can recognise an AB hydrolase-1 domain in the interval L30–D274. Catalysis depends on S103, which acts as the Nucleophile. D242 is an active-site residue. The active-site Proton donor is H269.

The protein belongs to the peptidase S33 family.

It localises to the cell envelope. The enzyme catalyses Release of N-terminal proline from a peptide.. Its function is as follows. Releases the N-terminal proline from various substrates. The protein is Proline iminopeptidase of Lacticaseibacillus rhamnosus (strain Lc 705) (Lactobacillus rhamnosus).